Consider the following 795-residue polypeptide: MTSGATRYRLSCSLRGHELDVRGLVCCAYPPGAFVSVSRDRTTRLWAPDSPNRSFTEMHCMSGHSNFVSCVCIIPSSDIYPHGLIATGGNDHNICIFSLDSPMPLYILKGHKNTVCSLSSGKFGTLLSGSWDTTAKVWLNDKCMMTLQGHTAAVWAVKILPEQGLMLTGSADKTVKLWKAGRCERTFSGHEDCVRGLAILSETEFLSCANDASIRRWQITGECLEVYYGHTNYIYSISVFPNCRDFVTTAEDRSLRIWKHGECAQTIRLPAQSIWCCCVLDNGDIVVGASDGIIRVFTESEDRTASAEEIKAFEKELSHATIDSKTGDLGDINAEQLPGREHLNEPGTREGQTRLIRDGEKVEAYQWSVSEGRWIKIGDVVGSSGANQQTSGKVLYEGKEFDYVFSIDVNEGGPSYKLPYNTSDDPWLTAYNFLQKNDLNPMFLDQVAKFIIDNTKGQMLGLGNPSFSDPFTGGGRYVPGSSGSSNTLPTADPFTGAGRYVPGSASMGTTMAGVDPFTGNSAYRSAASKTMNIYFPKKEAVTFDQANPTQILGKLKELNGTAPEEKKLTEDDLILLEKILSLICNSSSEKPTVQQLQILWKAINCPEDIVFPALDILRLSIKHPSVNENFCNEKEGAQFSSHLINLLNPKGKPANQLLALRTFCNCFVGQAGQKLMMSQRESLMSHAIELKSGSNKNIHIALATLALNYSVCFHKDHNIEGKAQCLSLISTILEVVQDLEATFRLLVALGTLISDDSNAVQLAKSLGVDSQIKKYSSVSEPAKVSECCRFILNLL.

WD repeat units follow at residues 17 to 56 (HELD…RSFT), 63 to 107 (GHSN…PLYI), 110 to 148 (GHKN…MTLQ), 149 to 188 (GHTA…RTFS), 190 to 227 (HEDC…LEVY), 229 to 268 (GHTN…QTIR), and 270 to 307 (PAQS…TASA). Phosphoserine is present on Ser50. A PFU domain is found at 366–465 (QWSVSEGRWI…KGQMLGLGNP (100 aa)). Lys529 is modified (N6-acetyllysine). One can recognise a PUL domain in the interval 533–794 (IYFPKKEAVT…SECCRFILNL (262 aa)). ARM repeat units follow at residues 546 to 588 (ANPT…NSSS), 589 to 620 (EKPT…LRLS), 621 to 669 (IKHP…CFVG), 670 to 715 (QAGQ…CFHK), 716 to 755 (DHNI…LISD), and 756 to 795 (DSNA…LNLL).

The protein belongs to the WD repeat PLAP family. Interacts with ubiquitin. Interacts with UBXN6, VCP and YOD1; may form a complex involved in macroautophagy.

Its subcellular location is the nucleus. The protein localises to the cytoplasm. The protein resides in the synapse. Its function is as follows. Plays a role in protein ubiquitination, sorting and degradation through its association with VCP. Involved in ubiquitin-mediated membrane proteins trafficking to late endosomes in an ESCRT-dependent manner, and hence plays a role in synaptic vesicle recycling. May play a role in macroautophagy, regulating for instance the clearance of damaged lysosomes. Plays a role in cerebellar Purkinje cell development. Positively regulates cytosolic and calcium-independent phospholipase A2 activities in a tumor necrosis factor alpha (TNF-alpha)- or lipopolysaccharide (LPS)-dependent manner, and hence prostaglandin E2 biosynthesis. The polypeptide is Phospholipase A-2-activating protein (PLAA) (Homo sapiens (Human)).